A 307-amino-acid polypeptide reads, in one-letter code: tRNA pseudouridine synthase B (307 aa).

Aspartate 38 (nucleophile) is an active-site residue.

It belongs to the pseudouridine synthase TruB family. Type 1 subfamily.

It carries out the reaction uridine(55) in tRNA = pseudouridine(55) in tRNA. Responsible for synthesis of pseudouridine from uracil-55 in the psi GC loop of transfer RNAs. In Lachnoclostridium phytofermentans (strain ATCC 700394 / DSM 18823 / ISDg) (Clostridium phytofermentans), this protein is tRNA pseudouridine synthase B.